The chain runs to 540 residues: Chaperonin GroEL 3 (540 aa).

ATP is bound by residues Thr30–Pro33, Lys51, Asp87–Thr91, Gly415, Asn480–Ala482, and Asp496.

The protein belongs to the chaperonin (HSP60) family. Forms a cylinder of 14 subunits composed of two heptameric rings stacked back-to-back. Interacts with the co-chaperonin GroES.

It localises to the cytoplasm. It catalyses the reaction ATP + H2O + a folded polypeptide = ADP + phosphate + an unfolded polypeptide.. Functionally, together with its co-chaperonin GroES, plays an essential role in assisting protein folding. The GroEL-GroES system forms a nano-cage that allows encapsulation of the non-native substrate proteins and provides a physical environment optimized to promote and accelerate protein folding. The sequence is that of Chaperonin GroEL 3 from Bradyrhizobium sp. (strain BTAi1 / ATCC BAA-1182).